A 740-amino-acid chain; its full sequence is Phosphoribosylformylglycinamidine synthase subunit PurL (740 aa).

His-50 is a catalytic residue. ATP contacts are provided by Tyr-53 and Lys-92. Glu-94 contributes to the Mg(2+) binding site. Residues 95-98 and Arg-117 each bind substrate; that span reads SHNH. Catalysis depends on His-96, which acts as the Proton acceptor. Asp-118 contributes to the Mg(2+) binding site. Gln-241 contributes to the substrate binding site. A Mg(2+)-binding site is contributed by Asp-269. Residue 313–315 participates in substrate binding; that stretch reads ESQ. ATP contacts are provided by Asp-495 and Gly-532. Asn-533 provides a ligand contact to Mg(2+). A substrate-binding site is contributed by Ser-535.

Belongs to the FGAMS family. Monomer. Part of the FGAM synthase complex composed of 1 PurL, 1 PurQ and 2 PurS subunits.

The protein localises to the cytoplasm. The catalysed reaction is N(2)-formyl-N(1)-(5-phospho-beta-D-ribosyl)glycinamide + L-glutamine + ATP + H2O = 2-formamido-N(1)-(5-O-phospho-beta-D-ribosyl)acetamidine + L-glutamate + ADP + phosphate + H(+). The protein operates within purine metabolism; IMP biosynthesis via de novo pathway; 5-amino-1-(5-phospho-D-ribosyl)imidazole from N(2)-formyl-N(1)-(5-phospho-D-ribosyl)glycinamide: step 1/2. Its function is as follows. Part of the phosphoribosylformylglycinamidine synthase complex involved in the purines biosynthetic pathway. Catalyzes the ATP-dependent conversion of formylglycinamide ribonucleotide (FGAR) and glutamine to yield formylglycinamidine ribonucleotide (FGAM) and glutamate. The FGAM synthase complex is composed of three subunits. PurQ produces an ammonia molecule by converting glutamine to glutamate. PurL transfers the ammonia molecule to FGAR to form FGAM in an ATP-dependent manner. PurS interacts with PurQ and PurL and is thought to assist in the transfer of the ammonia molecule from PurQ to PurL. This is Phosphoribosylformylglycinamidine synthase subunit PurL from Brucella abortus (strain S19).